Consider the following 427-residue polypeptide: Carboxyl-terminal-processing protease (427 aa).

Residues 1–31 form the signal peptide; it reads MGKRTRRFWALAFSLLMGALIYLGNTPSALA. Residues 104 to 186 enclose the PDZ domain; that stretch reads NLQVTTTGEL…TKVSLEILSA (83 aa). Catalysis depends on charge relay system residues Ser-313, Asp-324, and Lys-338.

This sequence belongs to the peptidase S41A family.

It is found in the cellular thylakoid lumen. It catalyses the reaction The enzyme shows specific recognition of a C-terminal tripeptide, Xaa-Yaa-Zaa, in which Xaa is preferably Ala or Leu, Yaa is preferably Ala or Tyr, and Zaa is preferably Ala, but then cleaves at a variable distance from the C-terminus. A typical cleavage is -Ala-Ala-|-Arg-Ala-Ala-Lys-Glu-Asn-Tyr-Ala-Leu-Ala-Ala.. Functionally, cleavage of the 16 C-terminal residues from the D1 precursor of photosystem II (PSII). This proteolytic processing is necessary to allow the light-driven assembly of the oxygen-evolving cluster (a tetranuclear manganese), which is responsible for photosynthetic water oxidation. This is Carboxyl-terminal-processing protease (ctpA) from Synechocystis sp. (strain ATCC 27184 / PCC 6803 / Kazusa).